The primary structure comprises 962 residues: Putative primase C962R (962 aa).

An SF3 helicase domain is found at 607–775 (ELDARLWIMF…PDPGNPYEKK (169 aa)). Residue 636-643 (GGGCNGKT) participates in ATP binding.

It belongs to the asfivirus helicase C962R family.

This is Putative primase C962R from African swine fever virus (strain Badajoz 1971 Vero-adapted) (Ba71V).